The sequence spans 206 residues: dCTP deaminase, dUMP-forming (206 aa).

Residues 117-122, Asp135, 143-145, Gln163, Tyr177, Lys184, and Gln188 each bind dCTP; these read RSSFGR and TLE. Glu145 acts as the Proton donor/acceptor in catalysis.

It belongs to the dCTP deaminase family. In terms of assembly, homotrimer.

The catalysed reaction is dCTP + 2 H2O = dUMP + NH4(+) + diphosphate. Its pathway is pyrimidine metabolism; dUMP biosynthesis; dUMP from dCTP: step 1/1. Bifunctional enzyme that catalyzes both the deamination of dCTP to dUTP and the hydrolysis of dUTP to dUMP without releasing the toxic dUTP intermediate. The chain is dCTP deaminase, dUMP-forming from Methanococcus maripaludis (strain C5 / ATCC BAA-1333).